Here is a 109-residue protein sequence, read N- to C-terminus: Nucleoid-associated protein VV1_2004 (109 aa).

This sequence belongs to the YbaB/EbfC family. In terms of assembly, homodimer.

It is found in the cytoplasm. Its subcellular location is the nucleoid. Binds to DNA and alters its conformation. May be involved in regulation of gene expression, nucleoid organization and DNA protection. The polypeptide is Nucleoid-associated protein VV1_2004 (Vibrio vulnificus (strain CMCP6)).